A 126-amino-acid chain; its full sequence is Aspartate 1-decarboxylase (126 aa).

Ser-25 functions as the Schiff-base intermediate with substrate; via pyruvic acid in the catalytic mechanism. Ser-25 carries the post-translational modification Pyruvic acid (Ser). Thr-57 provides a ligand contact to substrate. Tyr-58 functions as the Proton donor in the catalytic mechanism. 73 to 75 serves as a coordination point for substrate; sequence GAA.

The protein belongs to the PanD family. As to quaternary structure, heterooctamer of four alpha and four beta subunits. It depends on pyruvate as a cofactor. Post-translationally, is synthesized initially as an inactive proenzyme, which is activated by self-cleavage at a specific serine bond to produce a beta-subunit with a hydroxyl group at its C-terminus and an alpha-subunit with a pyruvoyl group at its N-terminus.

It localises to the cytoplasm. The catalysed reaction is L-aspartate + H(+) = beta-alanine + CO2. It participates in cofactor biosynthesis; (R)-pantothenate biosynthesis; beta-alanine from L-aspartate: step 1/1. Functionally, catalyzes the pyruvoyl-dependent decarboxylation of aspartate to produce beta-alanine. This is Aspartate 1-decarboxylase from Yersinia pestis bv. Antiqua (strain Antiqua).